The primary structure comprises 421 residues: Truncated surface protein (421 aa).

A signal peptide spans 1-31 (MRAKGTRKNYQHLWRWGTMLLGMLMICSAAE). Cys-53 and Cys-73 form a disulfide bridge. N-linked (GlcNAc...) asparagine; by host glycans are attached at residues Asn-87, Asn-97, Asn-129, Asn-135, Asn-140, Asn-151, Asn-155, Asn-183, Asn-192, Asn-229, Asn-236, Asn-257, Asn-271, Asn-284, Asn-290, Asn-296, Asn-326, Asn-333, Asn-349, and Asn-355. 5 cysteine pairs are disulfide-bonded: Cys-118–Cys-200, Cys-125–Cys-191, Cys-130–Cys-152, Cys-213–Cys-242, and Cys-223–Cys-234. The V1 stretch occupies residues 130 to 151 (CTDLTNATYANGSSEERGEIRN). The V2 stretch occupies residues 152–191 (CSFNVTTIIRNKIQKEYALFYRLDIVPIDKDNTSYTLINC). Residues 291–324 (CTRPNNNTKKGIAIGPGRTLYAREKIIGDIRQAH) are V3. Cys-291 and Cys-325 are oxidised to a cystine. The segment at 357 to 367 (SSGGDPEIVMH) is CD4-binding loop. Cysteines 378 and 410 form a disulfide. Positions 378 to 410 (CKTTQLFNSTWLFNSTWNDTERSDNNETIIIPC) are V4. 4 N-linked (GlcNAc...) asparagine; by host glycosylation sites follow: Asn-385, Asn-391, Asn-395, and Asn-403.

The protein localises to the virion membrane. The sequence is that of Truncated surface protein (env) from Human immunodeficiency virus type 1 group M subtype B (isolate NY5) (HIV-1).